The sequence spans 494 residues: WD repeat-containing protein 37 (494 aa).

Polar residues-rich tracts occupy residues 1–13 (MPTE…TARQ) and 22–31 (SLSIRRTNSS). A disordered region spans residues 1 to 50 (MPTESASCSTARQTKQKRKSHSLSIRRTNSSEQERTGLPRDMLEGQDSKL). A compositionally biased stretch (basic and acidic residues) spans 32–47 (EQERTGLPRDMLEGQD). 2 WD repeats span residues 154-194 (GHRD…CLVK) and 197-236 (GHVG…PTPQ). The disordered stretch occupies residues 237-265 (PVADTSISGEDEVECSDKDEPDLDGDVSS). Acidic residues predominate over residues 245 to 263 (GEDEVECSDKDEPDLDGDV). 5 WD repeats span residues 279–318 (SHQG…LVHS), 321–360 (GHDQ…IHSV), 365–403 (GHTD…SPIA), 406–445 (RTDS…LARL), and 452–493 (GHRR…LLQE).

As to quaternary structure, forms homodimers. Interacts with PACS1. Interacts with PACS2.

The protein localises to the cytoplasm. It is found in the nucleus. Required for normal ER Ca2+ handling in lymphocytes. Together with PACS1, it plays an essential role in stabilizing peripheral lymphocyte populations. The polypeptide is WD repeat-containing protein 37 (WDR37) (Homo sapiens (Human)).